A 312-amino-acid chain; its full sequence is Retron Ec83 reverse transcriptase (312 aa).

Positions Pro14–Leu239 constitute a Reverse transcriptase domain. Asp97, Asp185, and Asp186 together coordinate Mg(2+).

The protein belongs to the bacterial reverse transcriptase family.

It catalyses the reaction DNA(n) + a 2'-deoxyribonucleoside 5'-triphosphate = DNA(n+1) + diphosphate. Reverse transcriptase (RT) component of antiviral defense system retron Ec83, composed of a non-coding RNA (ncRNA), this reverse transcriptase (RT), a probable ATPase and a putative HNH endonuclease. Expression of retron Ec83 confers protection against bacteriophages T2, T4 and T6. At multiplicity of infection (MOI) of 0.02 cultures slow growth when infected with T4 but do not collapse, at MOI 2 cultures enter growth stasis. Responsible for synthesis of msDNA-Ec83 (a linear ssDNA with a 5'-terminal phosphate residue). Unlike most known msDNAs the mature product from the original strain does not have an RNA component. When the ncRNA plus RT are expressed in strain K12 / JM109 only linear DNA is seen in stationary phase cells, but logarithmic phase cells have both a linear and branched msDNA (a branched molecule with RNA linked by a 2',5'-phosphodiester bond to ssDNA, a 'classic' retron). The branched msDNA is probably the precursor for the mature linear msDNA, the precursor is cleaved endonucleolytically by ExoVII (xseA-xseB) leaving the observed mature 5'-phosphate ssDNA terminus. The retron transcript serves as primer (from a conserved internal G residue) and template for the reaction, and codes for the RT. Overexpression of the ncRNA and RT, which leads to increased levels of msDNA, is mutagenic in vivo. This may be due to a mismatch in the msDNA stem which binds and sequesters MutS and/or MutL. The chain is Retron Ec83 reverse transcriptase from Escherichia coli.